Reading from the N-terminus, the 532-residue chain is Cytochrome P450 monooxygenase criE (532 aa).

The chain crosses the membrane as a helical span at residues 18–38 (VSPAALSWAVVAVYIGTFFWL). Position 441 (Cys441) interacts with heme.

It belongs to the cytochrome P450 family. Heme is required as a cofactor.

It is found in the membrane. The catalysed reaction is preechinulin + reduced [NADPH--hemoprotein reductase] + O2 = neoechinulin A + oxidized [NADPH--hemoprotein reductase] + 2 H2O + H(+). The protein operates within secondary metabolite biosynthesis. It participates in alkaloid biosynthesis. Its function is as follows. Cytochrome P450 monooxygenase; part of the gene cluster that mediates the biosynthesis of echinulin family alkaloid. The pathway begins with the biosynthesis of the cyclic dipeptide cyclo-L-Trp-L-Ala (cyclo-TA) by the NRPS criC via condensation of L-alanine and L-tryptophan. The prenyltransferase criA then catalyzes the first prenylation step, a reverse prenylation reaction at C2, to yield preechinulin. Preechinulin is the substrate of the cytochrome P450 monooxygenase criE that catalyzes the formation of the double bond between C10 and C11 to produce neoechulin A. The unique prenyltransferase criF functions as a competitive enzyme with criE for preechinulin metabolization and uses preechinulin for effective regiospecific prenylations. Preechinulin is prenylated by criF at C5 or C7. C7-prenylation leads to accumulation of tardioxopiperazine B without further modification by criF. In contrast, the C5-prenylated tardioxopiperazine A can be prenylated again by criF, predominantly at C7 to form echinulin or less frequently at C4 to give variecolorin L. CriF also accepts neoechilunin A to produce varlecolorin G (prenylation at C5) or isoechinulin A (prenylation at C7). CriF further converts isoechinulin A into dehydroechinulin. Moreover, a yet unidentified enzyme can also convert neoechilunin A into neoechilunin B by introducing a double bond between positions C14 and C17 and thus provides a further substrate to criF for C5 and C7 prenylation. This is Cytochrome P450 monooxygenase criE from Aspergillus cristatus (Chinese Fuzhuan brick tea-fermentation fungus).